The chain runs to 484 residues: Ectonucleoside triphosphate diphosphohydrolase 6 (484 aa).

Topologically, residues Met-1–Arg-39 are cytoplasmic. The helical; Signal-anchor for type II membrane protein transmembrane segment at Val-40–Ile-60 threads the bilayer. Over Lys-61 to Ser-484 the chain is Lumenal. N-linked (GlcNAc...) asparagine glycosylation occurs at Asn-220. The Proton acceptor role is filled by Glu-224. Asn-284 is a glycosylation site (N-linked (GlcNAc...) asparagine). Cystine bridges form between Cys-325-Cys-356 and Cys-416-Cys-430.

This sequence belongs to the GDA1/CD39 NTPase family. As to quaternary structure, monomer. Ca(2+) serves as cofactor. The cofactor is Mg(2+). Post-translationally, the secreted form may be produced by intracellular processing. In terms of processing, N-glycosylated. In terms of tissue distribution, expressed in most tissues, but predominantly in heart.

The protein resides in the golgi apparatus membrane. It is found in the secreted. It localises to the cell membrane. It carries out the reaction a ribonucleoside 5'-diphosphate + H2O = a ribonucleoside 5'-phosphate + phosphate + H(+). The catalysed reaction is IDP + H2O = IMP + phosphate + H(+). It catalyses the reaction GDP + H2O = GMP + phosphate + H(+). The enzyme catalyses UDP + H2O = UMP + phosphate + H(+). Its activity is regulated as follows. Glycosylation does not appear to be required for enzymatic activity. In terms of biological role, catalyzes the hydrolysis of nucleoside triphosphates and diphosphates in a calcium- or magnesium-dependent manner. Has a strong preference for nucleoside diphosphates, preferentially hydrolyzes GDP, IDP, and UDP, with slower hydrolysis of CDP, ITP, GTP, CTP, ADP, and UTP and virtually no hydrolysis of ATP. The membrane bound form might support glycosylation reactions in the Golgi apparatus and, when released from cells, might catalyze the hydrolysis of extracellular nucleotides. The chain is Ectonucleoside triphosphate diphosphohydrolase 6 (ENTPD6) from Homo sapiens (Human).